We begin with the raw amino-acid sequence, 371 residues long: Ferrochelatase (371 aa).

The Fe cation site is built by H218 and E299.

The protein belongs to the ferrochelatase family.

The protein localises to the cytoplasm. It catalyses the reaction heme b + 2 H(+) = protoporphyrin IX + Fe(2+). It functions in the pathway porphyrin-containing compound metabolism; protoheme biosynthesis; protoheme from protoporphyrin-IX: step 1/1. Its function is as follows. Catalyzes the ferrous insertion into protoporphyrin IX. The polypeptide is Ferrochelatase (Cupriavidus taiwanensis (strain DSM 17343 / BCRC 17206 / CCUG 44338 / CIP 107171 / LMG 19424 / R1) (Ralstonia taiwanensis (strain LMG 19424))).